The following is a 362-amino-acid chain: Heat-inducible transcription repressor HrcA (362 aa).

Belongs to the HrcA family.

Functionally, negative regulator of class I heat shock genes (grpE-dnaK-dnaJ and groELS operons). Prevents heat-shock induction of these operons. This Nitrobacter hamburgensis (strain DSM 10229 / NCIMB 13809 / X14) protein is Heat-inducible transcription repressor HrcA.